A 460-amino-acid polypeptide reads, in one-letter code: Cysteine--tRNA ligase (460 aa).

Cys-28 contributes to the Zn(2+) binding site. The short motif at 30-40 is the 'HIGH' region element; sequence MTVYDYCHLGH. 3 residues coordinate Zn(2+): Cys-209, His-234, and Glu-238. The 'KMSKS' region motif lies at 266-270; it reads KMSKS. Lys-269 lines the ATP pocket.

It belongs to the class-I aminoacyl-tRNA synthetase family. In terms of assembly, monomer. Zn(2+) serves as cofactor.

It localises to the cytoplasm. The enzyme catalyses tRNA(Cys) + L-cysteine + ATP = L-cysteinyl-tRNA(Cys) + AMP + diphosphate. The polypeptide is Cysteine--tRNA ligase (Pseudomonas putida (strain GB-1)).